A 110-amino-acid chain; its full sequence is uncharacterized protein (110 aa).

A helical transmembrane segment spans residues 18–34; that stretch reads MFPLISTFTSIGLGVLM.

It localises to the membrane. This is an uncharacterized protein from Saccharomyces cerevisiae (strain ATCC 204508 / S288c) (Baker's yeast).